The primary structure comprises 154 residues: Superoxide dismutase [Cu-Zn] (154 aa).

Positions 47, 49, and 64 each coordinate Cu cation. A disulfide bond links cysteine 58 and cysteine 147. Residues histidine 64, histidine 72, histidine 81, and aspartate 84 each contribute to the Zn(2+) site. Histidine 121 is a binding site for Cu cation. The segment covering 125-136 has biased composition (basic and acidic residues); it reads DDLGKGGNEESL. Residues 125–144 are disordered; that stretch reads DDLGKGGNEESLKTGNAGPR. Arginine 144 serves as a coordination point for substrate.

Belongs to the Cu-Zn superoxide dismutase family. As to quaternary structure, homodimer. Cu cation is required as a cofactor. It depends on Zn(2+) as a cofactor.

Its subcellular location is the cytoplasm. The catalysed reaction is 2 superoxide + 2 H(+) = H2O2 + O2. In terms of biological role, destroys radicals which are normally produced within the cells and which are toxic to biological systems. The chain is Superoxide dismutase [Cu-Zn] (SOD1) from Candida glabrata (strain ATCC 2001 / BCRC 20586 / JCM 3761 / NBRC 0622 / NRRL Y-65 / CBS 138) (Yeast).